The following is a 148-amino-acid chain: Putative pre-16S rRNA nuclease (148 aa).

This sequence belongs to the YqgF nuclease family.

Its subcellular location is the cytoplasm. In terms of biological role, could be a nuclease involved in processing of the 5'-end of pre-16S rRNA. The polypeptide is Putative pre-16S rRNA nuclease (Nitrosomonas europaea (strain ATCC 19718 / CIP 103999 / KCTC 2705 / NBRC 14298)).